Here is a 1762-residue protein sequence, read N- to C-terminus: Kinase D-interacting substrate of 220 kDa (1762 aa).

Residues 1–508 (MSVLISQSVI…WLIVFLTLLL (508 aa)) lie on the Cytoplasmic side of the membrane. ANK repeat units follow at residues 45-74 (AAEQGNVEIVKELLKNGANCNLEDLDNWTA), 78-107 (ASKEGHIHIVEELLKSGASLEHRDMGGWTA), 111-140 (ACYKGRTDVVELLLSHGANPSVTGLYSVYP), 145-174 (AGRGHADIVHLLLQNGAKVNCSDKYGTTPL), 178-207 (ARKGHLECVKHLLAMGADVDQEGANSMTAL), 211-240 (VKGGYTQSVKEILKRNPNVNLTDKDGNTAL), 244-273 (SKEGHIEIVQDLLDAGTYVNIPDRSGDTVL), 277-306 (VRGGHVEIVRALLQKYADIDIRGQDNKTAL), 310-339 (VEKGNATMVRDILQCNPDTEICTKDGETPL), 343-372 (TKMRNIEVVELLLDKGAKVSAVDKKGDTPL), and 376-405 (IRGRSRRLAELLLRNPKDGRLLYRPNKAGE). The KAP NTPase domain maps to 440–953 (YDLYSSALAD…NIVSVTGRLL (514 aa)). A helical membrane pass occupies residues 509 to 529 (CGGLGLVFAFTVDTNLAIAIS). Topologically, residues 530 to 533 (LSFL) are extracellular. The chain crosses the membrane as a helical span at residues 534 to 554 (ALIYIFFIVIYFGGRREGESW). Residues 555-668 (NWAWALSTRL…SFVIFLFIVG (114 aa)) lie on the Cytoplasmic side of the membrane. The chain crosses the membrane as a helical span at residues 669 to 689 (CIIAGITLLAIFRVDPKHLTV). The Extracellular segment spans residues 690–696 (NAILISI). The chain crosses the membrane as a helical span at residues 697–717 (ASVVGLAFVLNCRTWWQVLDS). At 718–1680 (LLNSQRKRLH…TPSTVTLNNN (963 aa)) the chain is on the cytoplasmic side. Phosphoserine occurs at positions 882 and 885. Thr914 carries the phosphothreonine modification. Ser918 carries the post-translational modification Phosphoserine; by PKD. Positions 1089–1092 (PRPP) are mediates interaction with CRKL. Phosphoserine occurs at positions 1163, 1288, 1344, 1351, 1353, 1354, and 1357. 4 disordered regions span residues 1279-1305 (DPRFLNENSSAPVPHGESARRSSHTEL), 1336-1358 (RHSNLSWQSQTRRTPSLSSLNSQ), 1390-1440 (EGGT…DGRK), and 1452-1556 (YSSS…EPIR). Residues 1338–1350 (SNLSWQSQTRRTP) show a composition bias toward polar residues. A compositionally biased stretch (low complexity) spans 1395-1422 (SSTISGRSSPHSTYYIGQSSSGGSIHST). Over residues 1423–1440 (LEQERGKEGELKQEDGRK) the composition is skewed to basic and acidic residues. Residues 1452 to 1462 (YSSSGVSTNEA) are compositionally biased toward polar residues. Phosphoserine is present on residues Ser1513, Ser1518, Ser1547, and Ser1566. The segment covering 1514-1524 (DEDESGTEESD) has biased composition (acidic residues). Over residues 1529-1553 (LKDDKDKKAEGKAERVCKSPEHSAE) the composition is skewed to basic and acidic residues. The segment at 1571–1628 (DKKDSSDSGVRSNESSPNHSLHNEAADDSQLEKANLIELEDEGHSGKRGMPHSLSGLQ) is disordered. Residues 1579–1590 (GVRSNESSPNHS) show a composition bias toward polar residues. A phosphoserine mark is found at Ser1615 and Ser1625. Thr1671 carries the post-translational modification Phosphothreonine. Ser1673 is modified (phosphoserine). Thr1676 is modified (phosphothreonine). Positions 1704-1762 (ILRPGPSPNPTAVQNENLKSMAHKRSQRSSYTRLSKDASELHAASSESTGFGEERESIL) are disordered. Positions 1757–1762 (ERESIL) match the PDZ-binding motif.

In terms of assembly, found in a complex, at least composed of KIDINS220, MAGI2, NTRK1 and RAPGEF2; the complex is mainly formed at late endosomes in a nerve growth factor (NGF)-dependent manner. Interacts with RAPGEF2; the interaction is strengthened after NGF stimulation. Isoform 2 interacts (via C-terminal domain) with MAGI2 isoform 1 (via PDZ domain). Interacts with NTRK1, NTRK2, NTRK3, ERKL and NGFR. Can form a ternary complex with NGFR and NTRK1 and this complex is affected by the expression levels of KIDINS220/ARMS. An increase in KIDINS220/ARMS expression leads to a decreased association of NGFR and NTRK1. Interacts (via PDZ-binding motif) with SNTA1 and SNTB2 (via PDZ domains). Interacts with EPHA4 and PRKD1. Tyrosine phosphorylated by NTRK1, NTRK2, EPHB2 and EPHA4. Phosphorylation at Ser-918 is induced by phorbol ester treatment. Phosphorylation by NTRK2 is induced by brain-derived neurotrophic factor (BDNF) and neurotrophin-4/5. Phosphorylation by NTRK1 is induced by nerve growth factor (NGF). As to expression, expressed in developing nervous system and in highly plastic areas of the adult brain. Also expressed in neuroendocrine cells, where it concentrates at the tip of neurites. Expressed in developing muscle and is concentrated at the neuromuscular junction (NMS). SNTA1 can regulate its localization in the NMS.

Its subcellular location is the membrane. The protein localises to the late endosome. Promotes a prolonged MAP-kinase signaling by neurotrophins through activation of a Rap1-dependent mechanism. Provides a docking site for the CRKL-C3G complex, resulting in Rap1-dependent sustained ERK activation. May play an important role in regulating postsynaptic signal transduction through the syntrophin-mediated localization of receptor tyrosine kinases such as EPHA4. In cooperation with SNTA1 can enhance EPHA4-induced JAK/STAT activation. Plays a role in nerve growth factor (NGF)-induced recruitment of RAPGEF2 to late endosomes and neurite outgrowth. May play a role in neurotrophin- and ephrin-mediated neuronal outgrowth and in axon guidance during neural development and in neuronal regeneration. This is Kinase D-interacting substrate of 220 kDa (Kidins220) from Rattus norvegicus (Rat).